The chain runs to 97 residues: MFKLICIVFIATILSITSAADNEDELTIEDFLSYECNESMDIEELKEKDKVCSRCANLHKTQSVIERCRLNCFTSEYFKNCEDNLQAKEEEPEEETL.

Positions 1–19 (MFKLICIVFIATILSITSA) are cleaved as a signal peptide. 3 disulfide bridges follow: Cys-36–Cys-72, Cys-52–Cys-68, and Cys-55–Cys-81.

Belongs to the arthropod CHH/MIH/GIH/VIH hormone family. As to expression, expressed by the venom gland.

It is found in the secreted. Its function is as follows. May increase the toxicity of alpha-latrotoxin and/or other venom components. Is non-toxic to mice and to the cockroach Periplaneta americana. The polypeptide is Alpha-latrotoxin associated low molecular weight protein 2 (Steatoda grossa (False black widow)).